We begin with the raw amino-acid sequence, 388 residues long: Nitric oxide reductase FlRd-NAD(+) reductase (388 aa).

Belongs to the FAD-dependent oxidoreductase family. The cofactor is FAD.

It is found in the cytoplasm. It catalyses the reaction 2 reduced [nitric oxide reductase rubredoxin domain] + NAD(+) + H(+) = 2 oxidized [nitric oxide reductase rubredoxin domain] + NADH. Its pathway is nitrogen metabolism; nitric oxide reduction. Functionally, one of at least two accessory proteins for anaerobic nitric oxide (NO) reductase. Reduces the rubredoxin moiety of NO reductase. The chain is Nitric oxide reductase FlRd-NAD(+) reductase from Aeromonas salmonicida (strain A449).